A 95-amino-acid chain; its full sequence is DNA-directed RNA polymerase subunit Rpo11 (95 aa).

This sequence belongs to the archaeal Rpo11/eukaryotic RPB11/RPC19 RNA polymerase subunit family. Part of the RNA polymerase complex.

Its subcellular location is the cytoplasm. It carries out the reaction RNA(n) + a ribonucleoside 5'-triphosphate = RNA(n+1) + diphosphate. Functionally, DNA-dependent RNA polymerase (RNAP) catalyzes the transcription of DNA into RNA using the four ribonucleoside triphosphates as substrates. In Thermococcus sibiricus (strain DSM 12597 / MM 739), this protein is DNA-directed RNA polymerase subunit Rpo11.